We begin with the raw amino-acid sequence, 162 residues long: SsrA-binding protein (162 aa).

This sequence belongs to the SmpB family.

The protein resides in the cytoplasm. Its function is as follows. Required for rescue of stalled ribosomes mediated by trans-translation. Binds to transfer-messenger RNA (tmRNA), required for stable association of tmRNA with ribosomes. tmRNA and SmpB together mimic tRNA shape, replacing the anticodon stem-loop with SmpB. tmRNA is encoded by the ssrA gene; the 2 termini fold to resemble tRNA(Ala) and it encodes a 'tag peptide', a short internal open reading frame. During trans-translation Ala-aminoacylated tmRNA acts like a tRNA, entering the A-site of stalled ribosomes, displacing the stalled mRNA. The ribosome then switches to translate the ORF on the tmRNA; the nascent peptide is terminated with the 'tag peptide' encoded by the tmRNA and targeted for degradation. The ribosome is freed to recommence translation, which seems to be the essential function of trans-translation. The polypeptide is SsrA-binding protein (Sorangium cellulosum (strain So ce56) (Polyangium cellulosum (strain So ce56))).